The chain runs to 117 residues: uncharacterized protein (117 aa).

This is an uncharacterized protein from Encephalitozoon cuniculi (strain GB-M1) (Microsporidian parasite).